Consider the following 1030-residue polypeptide: Calcium-transporting ATPase 4, plasma membrane-type (1030 aa).

Over 1–157 (MSNLLRDFEV…NRYTEKPARS (157 aa)) the chain is Cytoplasmic. The tract at residues 19–30 (ARQRWRSSVSIV) is interaction with calmodulin. Serine 28 carries the post-translational modification Phosphoserine. The helical transmembrane segment at 158-178 (FLMFVWEALHDITLIILMVCA) threads the bilayer. The Lumenal segment spans residues 179-196 (VVSIGVGVATEGFPRGMY). The helical transmembrane segment at 197–217 (DGTGILLSILLVVMVTAISDY) threads the bilayer. Residues 218–345 (KQSLQFRDLD…EDETPLQVKL (128 aa)) are Cytoplasmic-facing. Residues 346 to 365 (NGVATIIGKIGLSFAVLTFV) traverse the membrane as a helical segment. At 366-395 (VLCIRFVLDKATSGSFTNWSSEDALTLLDY) the chain is on the lumenal side. Residues 396–413 (FAISVTIIVVAVPEGLPL) traverse the membrane as a helical segment. Topologically, residues 414–804 (AVTLSLAFAM…RWGRAVYINI (391 aa)) are cytoplasmic. The active-site 4-aspartylphosphate intermediate is the aspartate 451. The Mg(2+) site is built by aspartate 749 and aspartate 753. Residues 805–823 (QKFVQFQLTVNVVALIINF) form a helical membrane-spanning segment. The Lumenal segment spans residues 824-834 (VSACITGSAPL). Residues 835–855 (TAVQLLWVNMIMDTLGALALA) form a helical membrane-spanning segment. Residues 856 to 875 (TEPPNEGLMKRAPIARTASF) are Cytoplasmic-facing. Residues 876-898 (ITKTMWRNIAGQSVYQLIVLGIL) form a helical membrane-spanning segment. Residues 899 to 910 (NFAGKSLLKLDG) lie on the Lumenal side of the membrane. Residues 911–932 (PDSTAVLNTVIFNSFVFCQVFN) form a helical membrane-spanning segment. Topologically, residues 933-950 (EINSREIEKINVFKGMFN) are cytoplasmic. The helical transmembrane segment at 951-972 (SWVFTWVMTVTVVFQVIIVEFL) threads the bilayer. Residues 973 to 982 (GAFASTVPLS) are Lumenal-facing. A helical membrane pass occupies residues 983 to 1004 (WQHWLLSILIGSLNMIVAVILK). Residues 1005–1030 (CVPVESRHHHDGYDLLPSGPSSSNSA) lie on the Cytoplasmic side of the membrane.

The protein belongs to the cation transport ATPase (P-type) (TC 3.A.3) family. Type IIB subfamily.

It localises to the vacuole membrane. The catalysed reaction is Ca(2+)(in) + ATP + H2O = Ca(2+)(out) + ADP + phosphate + H(+). Activated by calmodulin. In terms of biological role, this magnesium-dependent enzyme catalyzes the hydrolysis of ATP coupled with the translocation of calcium from the cytosol into small vacuoles. The polypeptide is Calcium-transporting ATPase 4, plasma membrane-type (ACA4) (Arabidopsis thaliana (Mouse-ear cress)).